The chain runs to 819 residues: Ribosome-releasing factor 2, mitochondrial (819 aa).

The N-terminal 30 residues, 1-30 (MWKWNVRRWAGARVNISKNRLSVINVGSRY), are a transit peptide targeting the mitochondrion. Positions 39-327 (SKVRNIGIIA…AIVNYLPSPI (289 aa)) constitute a tr-type G domain. Residues 48–55 (AHIDAGKT), 113–117 (DTPGH), and 165–168 (NKMD) each bind GTP.

Belongs to the TRAFAC class translation factor GTPase superfamily. Classic translation factor GTPase family. EF-G/EF-2 subfamily.

The protein localises to the mitochondrion. Mitochondrial GTPase that mediates the disassembly of ribosomes from messenger RNA at the termination of mitochondrial protein biosynthesis. Not involved in the GTP-dependent ribosomal translocation step during translation elongation. This Saccharomyces cerevisiae (strain RM11-1a) (Baker's yeast) protein is Ribosome-releasing factor 2, mitochondrial.